The primary structure comprises 162 residues: Regulatory protein RecX (162 aa).

The protein belongs to the RecX family.

Its subcellular location is the cytoplasm. Its function is as follows. Modulates RecA activity. The chain is Regulatory protein RecX from Xanthomonas campestris pv. campestris (strain 8004).